A 331-amino-acid chain; its full sequence is MAVFTAVSDADLALWMRHYDLGDVVAFRGIPSGIENSNFFLTTTRGEYVLTIFENLTAGQLPFYVDLMSHLAKHGVPVPAPVARDDGTLFGELHGKPAAIVTKLEGAAQLAPGVEHCVEVGQMLARMHLAGRDYPRHQPNLRSLPWWRDTVPAIAPFVTGEQRALLEGELAHQAAFFASDDYAALPEGPCHCDLFRDNALFAHAEPDTGHSVRLGGFFDFYFAGCDKWLFDVAVTVNDWCVDLPTGALDAARADALLRAYQTVRPFTAGERRHWGDMLRAGAYRFWVSRLYDFHLPRAAQMLKPHDPGHFERILRERIAHAGALPETHACN.

It belongs to the pseudomonas-type ThrB family.

The catalysed reaction is L-homoserine + ATP = O-phospho-L-homoserine + ADP + H(+). It functions in the pathway amino-acid biosynthesis; L-threonine biosynthesis; L-threonine from L-aspartate: step 4/5. The protein is Homoserine kinase of Burkholderia pseudomallei (strain 1106a).